Here is a 24-residue protein sequence, read N- to C-terminus: Brevinin-1JDc (24 aa).

Cys18 and Cys24 form a disulfide bridge.

As to expression, expressed by the skin glands.

It is found in the secreted. Its function is as follows. Has antibacterial activity against E.coli ATCC 25992 (MIC=49 uM), E.coli CIB 84492 (MIC=25 uM), S.aureus ATCC 25923 (MIC=6 uM) and S.aureus CIB 85462 (MIC=3 uM). In Odorrana jingdongensis (Jingdong frog), this protein is Brevinin-1JDc.